The following is a 180-amino-acid chain: MNPAPNLVMVGPMGAGKSCIGRRLAERFGLEFVDVDQAIVDQVGSSIPAIFEQHGEARFRQYEAQILQALLEQDNKLISTGGGAVLDPRNRERICARGFVVYLHVSVPAQLTRLARDRNRPLLQRADREQVLHAMAAHRTPLYRQVADLSLETDHLSPAEATAQLVLRLAAQWRMSSTPA.

Residue 14 to 19 (GAGKSC) participates in ATP binding. Ser-18 is a Mg(2+) binding site. Positions 36, 60, and 82 each coordinate substrate. An ATP-binding site is contributed by Arg-120. Substrate is bound at residue Arg-139.

The protein belongs to the shikimate kinase family. In terms of assembly, monomer. The cofactor is Mg(2+).

Its subcellular location is the cytoplasm. The catalysed reaction is shikimate + ATP = 3-phosphoshikimate + ADP + H(+). It participates in metabolic intermediate biosynthesis; chorismate biosynthesis; chorismate from D-erythrose 4-phosphate and phosphoenolpyruvate: step 5/7. Functionally, catalyzes the specific phosphorylation of the 3-hydroxyl group of shikimic acid using ATP as a cosubstrate. The polypeptide is Shikimate kinase (Xanthomonas euvesicatoria pv. vesicatoria (strain 85-10) (Xanthomonas campestris pv. vesicatoria)).